The sequence spans 160 residues: SsrA-binding protein (160 aa).

This sequence belongs to the SmpB family.

Its subcellular location is the cytoplasm. Functionally, required for rescue of stalled ribosomes mediated by trans-translation. Binds to transfer-messenger RNA (tmRNA), required for stable association of tmRNA with ribosomes. tmRNA and SmpB together mimic tRNA shape, replacing the anticodon stem-loop with SmpB. tmRNA is encoded by the ssrA gene; the 2 termini fold to resemble tRNA(Ala) and it encodes a 'tag peptide', a short internal open reading frame. During trans-translation Ala-aminoacylated tmRNA acts like a tRNA, entering the A-site of stalled ribosomes, displacing the stalled mRNA. The ribosome then switches to translate the ORF on the tmRNA; the nascent peptide is terminated with the 'tag peptide' encoded by the tmRNA and targeted for degradation. The ribosome is freed to recommence translation, which seems to be the essential function of trans-translation. This chain is SsrA-binding protein, found in Citrobacter koseri (strain ATCC BAA-895 / CDC 4225-83 / SGSC4696).